The chain runs to 496 residues: MHAKSLTELRAALDAKECSAVELAQHYLKRIDAARDLNAFVHVDAELTLAQAKAADAALANGEAGPLAGLPIVHKDVFVTRGWRSTAGSKMLANYASPFDATVVARLSAAGMVTLGKTNMDEFAMGSSNENSAFGPVKNPWDTSAVPGGSSGGSSAAVAARLAPAATGTDTGGSIRQPASFAGVTGIKPTYGRVSRYGMIAFASSLDQGGPMARSAADCALLLNAMAGFDERDSTSLERADEDYTRHLGKAWAAGGDAGKPLAGLRIGLPAEYFGAGLADDVRAAIDAALKTYEALGATLVPVSLPKTELSIPVYYVIAPAEASSNLSRFDGVRYGHRAAEYRDLLDMYKKSRAEGFGPEVKRRILVGTYVLSHGYYDAYYLQAQKIRRIIAQDFQEAFKSCDVIMGPASPTVAWDIGAKGDDPVQMYLADIYTLSVSLAGLPGMSVPCGFGAGANAKRPVGLQIIGNYFDEARMLQVADAFQRATDWHVQEPAGV.

Residues K75 and S150 each act as charge relay system in the active site. The Acyl-ester intermediate role is filled by S174.

It belongs to the amidase family. GatA subfamily. As to quaternary structure, heterotrimer of A, B and C subunits.

The enzyme catalyses L-glutamyl-tRNA(Gln) + L-glutamine + ATP + H2O = L-glutaminyl-tRNA(Gln) + L-glutamate + ADP + phosphate + H(+). Allows the formation of correctly charged Gln-tRNA(Gln) through the transamidation of misacylated Glu-tRNA(Gln) in organisms which lack glutaminyl-tRNA synthetase. The reaction takes place in the presence of glutamine and ATP through an activated gamma-phospho-Glu-tRNA(Gln). The sequence is that of Glutamyl-tRNA(Gln) amidotransferase subunit A from Burkholderia mallei (strain NCTC 10247).